A 142-amino-acid polypeptide reads, in one-letter code: Hemoglobin subunit alpha (142 aa).

The region spanning 2–142 (VLSAADKTNV…VSTVLTSKYR (141 aa)) is the Globin domain. S4 bears the Phosphoserine mark. At K8 the chain carries N6-succinyllysine. T9 carries the phosphothreonine modification. K12 carries the post-translational modification N6-succinyllysine. An N6-acetyllysine; alternate modification is found at K17. Residue K17 is modified to N6-succinyllysine; alternate. K41 carries the post-translational modification N6-succinyllysine. Position 50 is a phosphoserine (S50). Position 59 (H59) interacts with O2. Residue H88 participates in heme b binding. S103 is subject to Phosphoserine. At T109 the chain carries Phosphothreonine. Phosphoserine occurs at positions 125 and 132. A phosphothreonine mark is found at T135 and T138. S139 is subject to Phosphoserine.

It belongs to the globin family. Heterotetramer of two alpha chains and two beta chains. In terms of tissue distribution, red blood cells.

Functionally, involved in oxygen transport from the lung to the various peripheral tissues. Hemopressin acts as an antagonist peptide of the cannabinoid receptor CNR1. Hemopressin-binding efficiently blocks cannabinoid receptor CNR1 and subsequent signaling. This Equus przewalskii (Przewalski's horse) protein is Hemoglobin subunit alpha (HBA).